The following is a 311-amino-acid chain: Methionyl-tRNA formyltransferase (311 aa).

Residue 109 to 112 participates in (6S)-5,6,7,8-tetrahydrofolate binding; the sequence is SLLP.

This sequence belongs to the Fmt family.

It carries out the reaction L-methionyl-tRNA(fMet) + (6R)-10-formyltetrahydrofolate = N-formyl-L-methionyl-tRNA(fMet) + (6S)-5,6,7,8-tetrahydrofolate + H(+). Functionally, attaches a formyl group to the free amino group of methionyl-tRNA(fMet). The formyl group appears to play a dual role in the initiator identity of N-formylmethionyl-tRNA by promoting its recognition by IF2 and preventing the misappropriation of this tRNA by the elongation apparatus. This chain is Methionyl-tRNA formyltransferase, found in Solibacter usitatus (strain Ellin6076).